The primary structure comprises 223 residues: Transmembrane protein 235 (223 aa).

The signal sequence occupies residues 1-28 (MARLGALLLAAALGALLSFALLAAAVAS). N41 carries an N-linked (GlcNAc...) asparagine glycan. Transmembrane regions (helical) follow at residues 96–116 (VIVV…CGLL), 126–146 (LLFT…GVSI), and 176–196 (WSMA…TLLL).

It belongs to the PMP-22/EMP/MP20 family. Post-translationally, N-glycosylated.

It is found in the membrane. Its subcellular location is the endoplasmic reticulum. The chain is Transmembrane protein 235 (TMEM235) from Homo sapiens (Human).